The chain runs to 323 residues: DNA-directed RNA polymerase subunit alpha (323 aa).

Residues 1–225 (MLDIAMPKIE…QYSQTIADFN (225 aa)) form an alpha N-terminal domain (alpha-NTD) region. The segment at 246 to 323 (IYDTPIEELD…SHAARAEIEG (78 aa)) is alpha C-terminal domain (alpha-CTD).

It belongs to the RNA polymerase alpha chain family. In terms of assembly, homodimer. The RNAP catalytic core consists of 2 alpha, 1 beta, 1 beta' and 1 omega subunit. When a sigma factor is associated with the core the holoenzyme is formed, which can initiate transcription.

It catalyses the reaction RNA(n) + a ribonucleoside 5'-triphosphate = RNA(n+1) + diphosphate. Its function is as follows. DNA-dependent RNA polymerase catalyzes the transcription of DNA into RNA using the four ribonucleoside triphosphates as substrates. The polypeptide is DNA-directed RNA polymerase subunit alpha (Roseiflexus sp. (strain RS-1)).